The sequence spans 580 residues: MDDLALCEANNVPLTPMTFLKRASECYPNRTSIIYGKTRFTWPQTYDRCCRLAASLISLNISKNDVVSVMAPNTPALYEMHFAVPMAGAVLNPINTRLDATSIAAILRHAKPKILFLDRSFEALARESLHLLSSEDSNLNLPVIFIHENDFPKRASFEELDYECLIQRGEPTPSMVARMFRIQDEHDPISLNYTSGTTADPKGVVISHRGAYLCTLSAIIGWEMGTCPVYLWTLPMFHCNGWTFTWGTAARGGTSVCMRHVTAPEIYKNIEMHNVTHMCCVPTVFNILLKGNSLDLSPRSGPVHVLTGGSPPPAALVKKVQRLGFQVMHAYGQTEATGPILFCEWQDEWNRLPENQQMELKARQGISILGLADVDVKNKETQKSAPRDGKTMGEILIKGSSIMKGYLKNPKATFEAFKHGWLNTGDVGVIHPDGHVEIKDRSKDIIISGGENISSVEVENVLYKYPKVLETAVVAMPHPTWGETPCAFVVLEKSETTIKEDRVDKFQTRERNLIEYCRENLPHFMCPRKVVFLEELPKNGNGKILKPKLRDIAKGLVVEDEINVIAKEVKRPVGHFISRL.

Residues 578 to 580 carry the Microbody targeting signal motif; that stretch reads SRL.

This sequence belongs to the ATP-dependent AMP-binding enzyme family.

The protein localises to the peroxisome. The catalysed reaction is benzoate + ATP + CoA = benzoyl-CoA + AMP + diphosphate. Functionally, benzoate--CoA ligase involved in benzoyloxyglucosinolate biosynthesis in seeds. Glucosinolates are secondary metabolites involved in pathogen and insect defense of cruciferous plants. The polypeptide is Benzoate--CoA ligase, peroxisomal (AAE20) (Arabidopsis thaliana (Mouse-ear cress)).